The following is a 443-amino-acid chain: Methionine aminopeptidase 2-1 (443 aa).

Residues 1–90 (MAAQADDELN…RVPVSELFPN (90 aa)) form a disordered region. Over residues 33-48 (ADNDDSEDDEKEEEGG) the composition is skewed to acidic residues. Residues 58–73 (KKKKKRKPKKKKKGGA) are compositionally biased toward basic residues. H196 contributes to the substrate binding site. The a divalent metal cation site is built by D216, D227, and H296. Substrate is bound at residue H304. The a divalent metal cation site is built by E329 and E424.

The protein belongs to the peptidase M24A family. Methionine aminopeptidase eukaryotic type 2 subfamily. Co(2+) serves as cofactor. Requires Zn(2+) as cofactor. It depends on Mn(2+) as a cofactor. Fe(2+) is required as a cofactor.

It localises to the cytoplasm. It carries out the reaction Release of N-terminal amino acids, preferentially methionine, from peptides and arylamides.. Cotranslationally removes the N-terminal methionine from nascent proteins. The N-terminal methionine is often cleaved when the second residue in the primary sequence is small and uncharged (Met-Ala-, Cys, Gly, Pro, Ser, Thr, or Val). The protein is Methionine aminopeptidase 2-1 of Talaromyces stipitatus (strain ATCC 10500 / CBS 375.48 / QM 6759 / NRRL 1006) (Penicillium stipitatum).